A 294-amino-acid chain; its full sequence is 4-hydroxy-tetrahydrodipicolinate synthase (294 aa).

Thr45 contacts pyruvate. The Proton donor/acceptor role is filled by Tyr133. Residue Lys161 is the Schiff-base intermediate with substrate of the active site. Ile203 contacts pyruvate.

Belongs to the DapA family. As to quaternary structure, homotetramer; dimer of dimers.

It localises to the cytoplasm. The enzyme catalyses L-aspartate 4-semialdehyde + pyruvate = (2S,4S)-4-hydroxy-2,3,4,5-tetrahydrodipicolinate + H2O + H(+). The protein operates within amino-acid biosynthesis; L-lysine biosynthesis via DAP pathway; (S)-tetrahydrodipicolinate from L-aspartate: step 3/4. Functionally, catalyzes the condensation of (S)-aspartate-beta-semialdehyde [(S)-ASA] and pyruvate to 4-hydroxy-tetrahydrodipicolinate (HTPA). This is 4-hydroxy-tetrahydrodipicolinate synthase from Shewanella baltica (strain OS223).